We begin with the raw amino-acid sequence, 373 residues long: Putative glutamate--cysteine ligase 2-1 (373 aa).

It belongs to the glutamate--cysteine ligase type 2 family. YbdK subfamily.

It catalyses the reaction L-cysteine + L-glutamate + ATP = gamma-L-glutamyl-L-cysteine + ADP + phosphate + H(+). ATP-dependent carboxylate-amine ligase which exhibits weak glutamate--cysteine ligase activity. The polypeptide is Putative glutamate--cysteine ligase 2-1 (Legionella pneumophila (strain Paris)).